The chain runs to 146 residues: UPF0260 protein VF_1660 (146 aa).

The protein belongs to the UPF0260 family.

The protein is UPF0260 protein VF_1660 of Aliivibrio fischeri (strain ATCC 700601 / ES114) (Vibrio fischeri).